The primary structure comprises 311 residues: tRNA-cytidine(32) 2-sulfurtransferase (311 aa).

A PP-loop motif motif is present at residues 47-52 (SGGKDS). [4Fe-4S] cluster contacts are provided by C122, C125, and C213.

It belongs to the TtcA family. Homodimer. The cofactor is Mg(2+). It depends on [4Fe-4S] cluster as a cofactor.

The protein resides in the cytoplasm. The catalysed reaction is cytidine(32) in tRNA + S-sulfanyl-L-cysteinyl-[cysteine desulfurase] + AH2 + ATP = 2-thiocytidine(32) in tRNA + L-cysteinyl-[cysteine desulfurase] + A + AMP + diphosphate + H(+). It functions in the pathway tRNA modification. Catalyzes the ATP-dependent 2-thiolation of cytidine in position 32 of tRNA, to form 2-thiocytidine (s(2)C32). The sulfur atoms are provided by the cysteine/cysteine desulfurase (IscS) system. The sequence is that of tRNA-cytidine(32) 2-sulfurtransferase from Klebsiella pneumoniae subsp. pneumoniae (strain ATCC 700721 / MGH 78578).